Here is a 228-residue protein sequence, read N- to C-terminus: 7-cyano-7-deazaguanine synthase (228 aa).

An ATP-binding site is contributed by F16–L26. Zn(2+) contacts are provided by C195, C203, C206, and C209.

It belongs to the QueC family. Requires Zn(2+) as cofactor.

It catalyses the reaction 7-carboxy-7-deazaguanine + NH4(+) + ATP = 7-cyano-7-deazaguanine + ADP + phosphate + H2O + H(+). It participates in purine metabolism; 7-cyano-7-deazaguanine biosynthesis. In terms of biological role, catalyzes the ATP-dependent conversion of 7-carboxy-7-deazaguanine (CDG) to 7-cyano-7-deazaguanine (preQ(0)). In Haemophilus influenzae (strain ATCC 51907 / DSM 11121 / KW20 / Rd), this protein is 7-cyano-7-deazaguanine synthase.